The following is an 81-amino-acid chain: Translational regulator CsrA (81 aa).

Residues 59–71 (SQMQHLEQGNFPT) are compositionally biased toward polar residues. Residues 59-81 (SQMQHLEQGNFPTSFDDDDFFNR) are disordered.

The protein belongs to the CsrA/RsmA family. As to quaternary structure, homodimer; the beta-strands of each monomer intercalate to form a hydrophobic core, while the alpha-helices form wings that extend away from the core.

Its subcellular location is the cytoplasm. Functionally, a key translational regulator that binds mRNA to regulate translation initiation and/or mRNA stability. Mediates global changes in gene expression, shifting from rapid growth to stress survival by linking envelope stress, the stringent response and the catabolite repression systems. Usually binds in the 5'-UTR; binding at or near the Shine-Dalgarno sequence prevents ribosome-binding, repressing translation, binding elsewhere in the 5'-UTR can activate translation and/or stabilize the mRNA. Its function is antagonized by small RNA(s). The sequence is that of Translational regulator CsrA from Psychrobacter sp. (strain PRwf-1).